A 102-amino-acid chain; its full sequence is Protamine-2 (102 aa).

3 positions are modified to phosphoserine: S8, S10, and S37. Disordered regions lie at residues 15–41 and 66–102; these read EVYG…PEQV and IHRQ…CRRH.

The protein belongs to the protamine P2 family. As to quaternary structure, interacts with TDRP. Proteolytic processing into mature chains is required for histone eviction during spermatogenesis. Transition proteins (TNP1 and TNP2) are required for processing. In terms of tissue distribution, testis.

It localises to the nucleus. It is found in the chromosome. Protamines substitute for histones in the chromatin of sperm during the haploid phase of spermatogenesis. They compact sperm DNA into a highly condensed, stable and inactive complex. In Pongo pygmaeus (Bornean orangutan), this protein is Protamine-2 (PRM2).